A 354-amino-acid chain; its full sequence is MTALKNDRFLRALLKQPVDVTPVWMMRQAGRYLPEYRASRAKAGDFMSLCMNPQFACEVTLQPLDRYPLDAAILFSDILTIPDAMGLGLYFETGEGPRFKKVISTPADIEALPIPDPQKDLGYVMDAVSTIRRELNGRVPLIGFSGSPWTLATYMVEGGSSKDFRKTKAMAYDNPQALHLLLDKLAQSVTSYLNGQILAGAQAVQIFDTWGGNLSAAAYQEFSLAYMRKIVSGLIREHEGRKVPVILFTKNGGLWLESIAEAGADALGLDWTCEIGDARRRVGDRVALQGNMDPTVLYAKPEAIRQEVARILASYGQGTGHVFNLGHGITPEVDPEHAGVFINAVHELSAQYHQ.

Residues 27–31 (RQAGR), Asp-77, Tyr-154, Thr-209, and His-327 contribute to the substrate site.

This sequence belongs to the uroporphyrinogen decarboxylase family. Homodimer.

It localises to the cytoplasm. It catalyses the reaction uroporphyrinogen III + 4 H(+) = coproporphyrinogen III + 4 CO2. Its pathway is porphyrin-containing compound metabolism; protoporphyrin-IX biosynthesis; coproporphyrinogen-III from 5-aminolevulinate: step 4/4. Functionally, catalyzes the decarboxylation of four acetate groups of uroporphyrinogen-III to yield coproporphyrinogen-III. This is Uroporphyrinogen decarboxylase from Pseudomonas putida (strain GB-1).